The primary structure comprises 95 residues: MSVTRDDVRKVARLSRIAVPEERLDELAGELNGILGWIDQLNEVDVEGVEPMTSVVETKLPMRDDVVTDGNIQDQVLANAPRSEHGFFVVPKAVE.

This sequence belongs to the GatC family. As to quaternary structure, heterotrimer of A, B and C subunits.

It carries out the reaction L-glutamyl-tRNA(Gln) + L-glutamine + ATP + H2O = L-glutaminyl-tRNA(Gln) + L-glutamate + ADP + phosphate + H(+). It catalyses the reaction L-aspartyl-tRNA(Asn) + L-glutamine + ATP + H2O = L-asparaginyl-tRNA(Asn) + L-glutamate + ADP + phosphate + 2 H(+). Allows the formation of correctly charged Asn-tRNA(Asn) or Gln-tRNA(Gln) through the transamidation of misacylated Asp-tRNA(Asn) or Glu-tRNA(Gln) in organisms which lack either or both of asparaginyl-tRNA or glutaminyl-tRNA synthetases. The reaction takes place in the presence of glutamine and ATP through an activated phospho-Asp-tRNA(Asn) or phospho-Glu-tRNA(Gln). The protein is Aspartyl/glutamyl-tRNA(Asn/Gln) amidotransferase subunit C of Hyphomonas neptunium (strain ATCC 15444).